Reading from the N-terminus, the 75-residue chain is UPF0181 protein ETA_15280 (75 aa).

The protein belongs to the UPF0181 family.

This is UPF0181 protein ETA_15280 from Erwinia tasmaniensis (strain DSM 17950 / CFBP 7177 / CIP 109463 / NCPPB 4357 / Et1/99).